Here is a 429-residue protein sequence, read N- to C-terminus: MFS-type efflux pump MSMEG_3705 (429 aa).

Helical transmembrane passes span 21–41, 59–79, 86–106, 115–137, 150–170, 181–201, 228–248, 264–284, 299–319, 327–347, 361–381, and 397–417; these read AWAA…DRFL, AIGV…GIAV, GAFG…TMLG, LALT…HAYV, LAVI…GGGL, FVIM…VVGV, FLIV…LTTF, VGVE…LIVG, LWIV…AFVV, LFLA…IAAI, AMFL…VGML, and ALLL…WLAS.

This sequence belongs to the major facilitator superfamily.

The protein localises to the cell inner membrane. In terms of biological role, probably plays a role in bacterial growth and resistance to antibiotics. The protein is MFS-type efflux pump MSMEG_3705 of Mycolicibacterium smegmatis (strain ATCC 700084 / mc(2)155) (Mycobacterium smegmatis).